The sequence spans 242 residues: Probable transcriptional regulatory protein LBA0733 (242 aa).

Residues 1 to 22 (MSGHSKWHNIQGRKNAQDAKRG) form a disordered region.

The protein belongs to the TACO1 family.

The protein resides in the cytoplasm. This chain is Probable transcriptional regulatory protein LBA0733, found in Lactobacillus acidophilus (strain ATCC 700396 / NCK56 / N2 / NCFM).